The sequence spans 124 residues: MASLRYRRFLKLCEEWPVDETRVGRDLGAFIRQRVAQAFREGESTQVDDPDACDEMYASLNRMNTNYYREKYPRLQDTSFTEVTAEEYKMVLASDNLKQMEEMKKGMWKRLRDKFNVKPSEENS.

Residues 1–13 (MASLRYRRFLKLC) constitute a mitochondrion transit peptide.

Its subcellular location is the mitochondrion matrix. It localises to the mitochondrion nucleoid. The protein resides in the mitochondrion. Functionally, required for the assembly of the ubiquinol-cytochrome c reductase complex (mitochondrial respiratory chain complex III or cytochrome b-c1 complex). May play a role in the modulation of respiratory chain activities such as oxygen consumption and ATP production. May be involved in cytochrome b translation and/or stability. The protein is Ubiquinol-cytochrome-c reductase complex assembly factor 2 (uqcc2) of Xenopus tropicalis (Western clawed frog).